A 290-amino-acid chain; its full sequence is 4-diphosphocytidyl-2-C-methyl-D-erythritol kinase (290 aa).

Residue Lys-12 is part of the active site. Position 97 to 107 (97 to 107) interacts with ATP; the sequence is PVASGIGGGSA. Asp-139 is an active-site residue.

Belongs to the GHMP kinase family. IspE subfamily.

It catalyses the reaction 4-CDP-2-C-methyl-D-erythritol + ATP = 4-CDP-2-C-methyl-D-erythritol 2-phosphate + ADP + H(+). The protein operates within isoprenoid biosynthesis; isopentenyl diphosphate biosynthesis via DXP pathway; isopentenyl diphosphate from 1-deoxy-D-xylulose 5-phosphate: step 3/6. Catalyzes the phosphorylation of the position 2 hydroxy group of 4-diphosphocytidyl-2C-methyl-D-erythritol. The sequence is that of 4-diphosphocytidyl-2-C-methyl-D-erythritol kinase from Parvibaculum lavamentivorans (strain DS-1 / DSM 13023 / NCIMB 13966).